Reading from the N-terminus, the 1414-residue chain is DNA-directed RNA polymerase subunit beta' (1414 aa).

C70, C72, C85, and C88 together coordinate Zn(2+). Residues D460, D462, and D464 each contribute to the Mg(2+) site. Residues C814, C888, C895, and C898 each coordinate Zn(2+). Over residues 1392–1403 the composition is skewed to low complexity; sequence EQALSEALKSSA. Residues 1392-1414 form a disordered region; that stretch reads EQALSEALKSSAPQEAKAAQKDE.

Belongs to the RNA polymerase beta' chain family. The RNAP catalytic core consists of 2 alpha, 1 beta, 1 beta' and 1 omega subunit. When a sigma factor is associated with the core the holoenzyme is formed, which can initiate transcription. Requires Mg(2+) as cofactor. Zn(2+) is required as a cofactor.

It catalyses the reaction RNA(n) + a ribonucleoside 5'-triphosphate = RNA(n+1) + diphosphate. DNA-dependent RNA polymerase catalyzes the transcription of DNA into RNA using the four ribonucleoside triphosphates as substrates. In Coxiella burnetii (strain Dugway 5J108-111), this protein is DNA-directed RNA polymerase subunit beta'.